A 224-amino-acid chain; its full sequence is (S)-2-haloacid dehalogenase H-109 (224 aa).

Asp-10 (nucleophile) is an active-site residue. An (S)-2-haloacid is bound by residues 11–12 (LY), Arg-41, and 118–119 (SN). An important for catalytic activity region spans residues 175 to 180 (SSNSWD).

The protein belongs to the HAD-like hydrolase superfamily. S-2-haloalkanoic acid dehalogenase family.

The catalysed reaction is an (S)-2-haloacid + H2O = a (2R)-2-hydroxycarboxylate + a halide anion + H(+). The enzyme catalyses (S)-2-chloropropanoate + H2O = (R)-lactate + chloride + H(+). Functionally, catalyzes the hydrolytic dehalogenation of small (S)-2-haloalkanoic acids to yield the corresponding (R)-2-hydroxyalkanoic acids. Acts on acids of short chain lengths, C(2) to C(4), with inversion of configuration at C-2. Active with 2-halogenated carboxylic acids and converts only the S-isomer (or L-isomer) of 2-chloropropionic acid with inversion of configuration to produce R-lactate (or D-isomer). The protein is (S)-2-haloacid dehalogenase H-109 of Pseudomonas putida (Arthrobacter siderocapsulatus).